The chain runs to 595 residues: UvrABC system protein C (595 aa).

The GIY-YIG domain occupies 14–91 (DSPGCYIHKD…IQENKPKYNI (78 aa)). A UVR domain is found at 196–231 (DKIVNELRDKMTKASELMEFERAAEYRDLIEGIGLL).

This sequence belongs to the UvrC family. Interacts with UvrB in an incision complex.

The protein resides in the cytoplasm. Functionally, the UvrABC repair system catalyzes the recognition and processing of DNA lesions. UvrC both incises the 5' and 3' sides of the lesion. The N-terminal half is responsible for the 3' incision and the C-terminal half is responsible for the 5' incision. The polypeptide is UvrABC system protein C (Streptococcus mutans serotype c (strain ATCC 700610 / UA159)).